Consider the following 423-residue polypeptide: CinA-like protein (423 aa).

The protein belongs to the CinA family.

The protein is CinA-like protein of Prochlorococcus marinus (strain SARG / CCMP1375 / SS120).